Here is a 452-residue protein sequence, read N- to C-terminus: PHO85 cyclin CLG1 (452 aa).

The protein belongs to the cyclin family. PCL1,2 subfamily. In terms of assembly, forms a cyclin-CDK complex with PHO85.

Cyclin partner of the cyclin-dependent kinase (CDK) PHO85. Has a role in cell integrity and polarized cell growth together with the other PCL1/PCL2 cyclin family members. The protein is PHO85 cyclin CLG1 (CLG1) of Saccharomyces cerevisiae (strain ATCC 204508 / S288c) (Baker's yeast).